A 454-amino-acid chain; its full sequence is Nuclear distribution protein PAC1-1 (454 aa).

Residues 9–41 form the LisH domain; the sequence is QAEELHRALIAYLSSNNLTSTAAALRAEIGLGE. Positions 71–93 are disordered; that stretch reads RHTSQLSNATPTSRQNKDPVNWL. Residues 73–84 show a composition bias toward polar residues; that stretch reads TSQLSNATPTSR. 7 WD repeats span residues 104–145, 147–187, 191–236, 239–278, 283–342, 344–383, and 388–450; these read SHRQ…RTIK, HTKT…KNIR, GHDH…CVKT, GHAEWVRDVCPSVDGRFILSTSDDYTSRLWDVSIANPEPK, GHEH…IKIL, GHDNWVRGLVFHPGGKYLLSASDDYTLRCWDLTQEGRCVK, and AHAH…LNVR.

Belongs to the WD repeat LIS1/nudF family. Self-associates. Interacts with NDL1 and dynein.

It localises to the cytoplasm. The protein resides in the cytoskeleton. It is found in the spindle pole. In terms of biological role, positively regulates the activity of the minus-end directed microtubule motor protein dynein. May enhance dynein-mediated microtubule sliding by targeting dynein to the microtubule plus end. Required for nuclear migration during vegetative growth as well as development. Required for retrograde early endosome (EE) transport from the hyphal tip. Required for localization of dynein to the mitotic spindle poles. Recruits additional proteins to the dynein complex at SPBs. This chain is Nuclear distribution protein PAC1-1, found in Chaetomium globosum (strain ATCC 6205 / CBS 148.51 / DSM 1962 / NBRC 6347 / NRRL 1970) (Soil fungus).